A 372-amino-acid chain; its full sequence is CXADR-like membrane protein (372 aa).

The signal sequence occupies residues 1–17 (MSLFFLWLVTYYVGTLG). Ig-like C2-type domains are found at residues 18 to 126 (THTE…VILK) and 134 to 223 (PKCE…VRVT). Over 18–234 (THTEIKRVAE…QYVQSIGMVA (217 aa)) the chain is Extracellular. Cystine bridges form between C34/C110 and C152/C207. N-linked (GlcNAc...) asparagine glycosylation is found at N73 and N196. Residues 235 to 255 (GAVTGIVAGALLIFLLIWLLI) traverse the membrane as a helical segment. The Cytoplasmic portion of the chain corresponds to 256 to 372 (RRKSKERYEE…PSQSRAFQTV (117 aa)). Positions 263–280 (YEEEDRPNEIREDAEAPR) are enriched in basic and acidic residues. Residues 263 to 372 (YEEEDRPNEI…PSQSRAFQTV (110 aa)) are disordered. Composition is skewed to low complexity over residues 287–313 (SSSS…ASRS) and 352–361 (LTKAETTLST). Residues 362 to 372 (MPSQSRAFQTV) are compositionally biased toward polar residues.

In terms of tissue distribution, predominantly expressed in the white adipose tissue.

It localises to the cell junction. The protein localises to the tight junction. Its subcellular location is the cell membrane. Functionally, may be involved in the cell-cell adhesion. May play a role in adipocyte differentiation and development of obesity. Is required for normal small intestine development. This is CXADR-like membrane protein (Clmp) from Rattus norvegicus (Rat).